The following is a 572-amino-acid chain: DNA mismatch repair protein MutL (572 aa).

The protein belongs to the DNA mismatch repair MutL/HexB family.

This protein is involved in the repair of mismatches in DNA. It is required for dam-dependent methyl-directed DNA mismatch repair. May act as a 'molecular matchmaker', a protein that promotes the formation of a stable complex between two or more DNA-binding proteins in an ATP-dependent manner without itself being part of a final effector complex. In Dictyoglomus turgidum (strain DSM 6724 / Z-1310), this protein is DNA mismatch repair protein MutL.